The following is a 671-amino-acid chain: DNA ligase (671 aa).

NAD(+)-binding positions include Asp32–Asp36, Ser81–Leu82, and Glu113. The active-site N6-AMP-lysine intermediate is the Lys115. 4 residues coordinate NAD(+): Arg136, Glu173, Lys290, and Lys314. Residues Cys408, Cys411, Cys426, and Cys432 each coordinate Zn(2+). One can recognise a BRCT domain in the interval Glu593 to Ser671.

This sequence belongs to the NAD-dependent DNA ligase family. LigA subfamily. It depends on Mg(2+) as a cofactor. Mn(2+) is required as a cofactor.

It carries out the reaction NAD(+) + (deoxyribonucleotide)n-3'-hydroxyl + 5'-phospho-(deoxyribonucleotide)m = (deoxyribonucleotide)n+m + AMP + beta-nicotinamide D-nucleotide.. Functionally, DNA ligase that catalyzes the formation of phosphodiester linkages between 5'-phosphoryl and 3'-hydroxyl groups in double-stranded DNA using NAD as a coenzyme and as the energy source for the reaction. It is essential for DNA replication and repair of damaged DNA. The protein is DNA ligase of Escherichia coli O1:K1 / APEC.